A 291-amino-acid chain; its full sequence is Taste receptor type 2 member 16 (291 aa).

Met1 is a topological domain (extracellular). Residues Ile2–Ile22 traverse the membrane as a helical segment. The Cytoplasmic portion of the chain corresponds to Val23–Arg41. The helical transmembrane segment at Leu42–Ala62 threads the bilayer. At Ser63–Thr84 the chain is on the extracellular side. The N-linked (GlcNAc...) asparagine glycan is linked to Asn80. The helical transmembrane segment at Trp85 to Ile105 threads the bilayer. Topologically, residues Lys106 to Leu125 are cytoplasmic. A helical membrane pass occupies residues Phe126–Ile146. At Gly147–Thr182 the chain is on the extracellular side. A glycan (N-linked (GlcNAc...) asparagine) is linked at Asn163. A helical transmembrane segment spans residues Val183–Leu203. Topologically, residues Thr204–Ser228 are cytoplasmic. Residues Leu229–Gly249 form a helical membrane-spanning segment. Residues Thr250 to Trp257 are Extracellular-facing. Residues Leu258 to Leu278 form a helical membrane-spanning segment. Over Ser279 to Cys291 the chain is Cytoplasmic.

It belongs to the G-protein coupled receptor T2R family. In terms of assembly, interacts with RTP3 and RTP4.

The protein resides in the cell membrane. Its function is as follows. Receptor that may play a role in the perception of bitterness and is gustducin-linked. May play a role in sensing the chemical composition of the gastrointestinal content. The activity of this receptor may stimulate alpha gustducin, mediate PLC-beta-2 activation and lead to the gating of TRPM5. In Gorilla gorilla gorilla (Western lowland gorilla), this protein is Taste receptor type 2 member 16 (TAS2R16).